An 879-amino-acid polypeptide reads, in one-letter code: DNA mismatch repair protein MutS (879 aa).

Gly-629–Ser-636 is a binding site for ATP.

This sequence belongs to the DNA mismatch repair MutS family.

In terms of biological role, this protein is involved in the repair of mismatches in DNA. It is possible that it carries out the mismatch recognition step. This protein has a weak ATPase activity. The polypeptide is DNA mismatch repair protein MutS (Erythrobacter litoralis (strain HTCC2594)).